Here is a 466-residue protein sequence, read N- to C-terminus: MVFLSGNASDSSNCTQPPAPVNISKAILLGVILGGLILFGVLGNILVILSVACHRHLHSVTHYYIVNLAVADLLLTSTVLPFSAIFEVLGYWAFGRVFCNIWAAVDVLCCTASIMGLCIISIDRYIGVSYPLRYPTIVTQRRGLMALLCVWALSLVISIGPLFGWRQPAPEDETICQINEEPGYVLFSALGSFYLPLAIILVMYCRVYVVAKRESRGLKSGLKTDKSDSEQVTLRIHRKNAPAGGSGMASAKTKTHFSVRLLKFSREKKAAKTLGIVVGCFVLCWLPFFLVMPIGSFFPDFKPSETVFKIVFWLGYLNSCINPIIYPCSSQEFKKAFQNVLRIQCLCRKQSSKHALGYTLHPPSQAVEGQHKDMVRIPVGSRETFYRISKTDGVCEWKFFSSMPRGSARITVSKDQSSCTTARVRSKSFLQVCCCVGPSTPSLDKNHQVPTIKVHTISLSENGEEV.

The Extracellular portion of the chain corresponds to 1–27; that stretch reads MVFLSGNASDSSNCTQPPAPVNISKAI. N-linked (GlcNAc...) asparagine glycans are attached at residues Asn7, Asn13, and Asn22. The helical transmembrane segment at 28-51 threads the bilayer; it reads LLGVILGGLILFGVLGNILVILSV. Residues 52 to 64 are Cytoplasmic-facing; sequence ACHRHLHSVTHYY. Residues 65-88 form a helical membrane-spanning segment; sequence IVNLAVADLLLTSTVLPFSAIFEV. Over 89 to 99 the chain is Extracellular; the sequence is LGYWAFGRVFC. Cys99 and Cys176 are disulfide-bonded. The helical transmembrane segment at 100 to 122 threads the bilayer; that stretch reads NIWAAVDVLCCTASIMGLCIISI. At 123–143 the chain is on the cytoplasmic side; sequence DRYIGVSYPLRYPTIVTQRRG. A helical transmembrane segment spans residues 144–167; the sequence is LMALLCVWALSLVISIGPLFGWRQ. Topologically, residues 168–181 are extracellular; the sequence is PAPEDETICQINEE. Residues 182-205 traverse the membrane as a helical segment; that stretch reads PGYVLFSALGSFYLPLAIILVMYC. Residues 206–273 lie on the Cytoplasmic side of the membrane; sequence RVYVVAKRES…FSREKKAAKT (68 aa). Ser215 is subject to Phosphoserine; by PKA. Residues 274-297 form a helical membrane-spanning segment; it reads LGIVVGCFVLCWLPFFLVMPIGSF. Residues 298–305 lie on the Extracellular side of the membrane; it reads FPDFKPSE. A helical transmembrane segment spans residues 306-329; the sequence is TVFKIVFWLGYLNSCINPIIYPCS. The Cytoplasmic portion of the chain corresponds to 330-466; that stretch reads SQEFKKAFQN…ISLSENGEEV (137 aa). The Nuclear localization signal signature appears at 334–349; it reads KKAFQNVLRIQCLCRK. Cys345 is lipidated: S-palmitoyl cysteine.

Belongs to the G-protein coupled receptor 1 family. Adrenergic receptor subfamily. ADRA1A sub-subfamily. In terms of assembly, homo- and heterooligomer. Heterooligomerizes with ADRA1B homooligomers in cardiac myocytes. Interacts with CAVIN4. In terms of processing, C-terminal Ser or Thr residues may be phosphorylated. Expressed in heart, brain, liver and prostate, but not in kidney, lung, adrenal, aorta and pituitary. Within the prostate, expressed in the apex, base, periurethral and lateral lobe. Isoform 4 is the most abundant isoform expressed in the prostate with high levels also detected in liver and heart.

It localises to the nucleus membrane. It is found in the cell membrane. Its subcellular location is the cytoplasm. The protein localises to the membrane. The protein resides in the caveola. In terms of biological role, this alpha-adrenergic receptor mediates its action by association with G proteins that activate a phosphatidylinositol-calcium second messenger system. Its effect is mediated by G(q) and G(11) proteins. Nuclear ADRA1A-ADRA1B heterooligomers regulate phenylephrine(PE)-stimulated ERK signaling in cardiac myocytes. The polypeptide is Alpha-1A adrenergic receptor (ADRA1A) (Homo sapiens (Human)).